Here is a 349-residue protein sequence, read N- to C-terminus: Small ribosomal subunit protein eS6 (349 aa).

The interval 224–349 is disordered; sequence RRRSRLSSMR…AKKEKKQKKK (126 aa). Composition is skewed to basic and acidic residues over residues 231–251 and 260–334; these read SMRD…EKAA and KKEA…EAAK.

This sequence belongs to the eukaryotic ribosomal protein eS6 family. In terms of assembly, component of the small ribosomal subunit. Part of the small subunit (SSU) processome, composed of more than 70 proteins and the RNA chaperone small nucleolar RNA (snoRNA) U3. Ribosomal protein S6 is the major substrate of protein kinases in eukaryote ribosomes.

It is found in the cytoplasm. The protein localises to the nucleus. The protein resides in the nucleolus. Functionally, component of the 40S small ribosomal subunit. Plays an important role in controlling cell growth and proliferation through the selective translation of particular classes of mRNA. Part of the small subunit (SSU) processome, first precursor of the small eukaryotic ribosomal subunit. During the assembly of the SSU processome in the nucleolus, many ribosome biogenesis factors, an RNA chaperone and ribosomal proteins associate with the nascent pre-rRNA and work in concert to generate RNA folding, modifications, rearrangements and cleavage as well as targeted degradation of pre-ribosomal RNA by the RNA exosome. The protein is Small ribosomal subunit protein eS6 (RpS6) of Aedes albopictus (Asian tiger mosquito).